The sequence spans 567 residues: Hexose transporter HXT11 (567 aa).

Residues 1-22 (MSGVNNTSANELSTTMSNSNSA) show a composition bias toward polar residues. Residues 1–45 (MSGVNNTSANELSTTMSNSNSAVGAPSVKTEHGDSKNSLNLDANE) form a disordered region. Residues 1 to 56 (MSGVNNTSANELSTTMSNSNSAVGAPSVKTEHGDSKNSLNLDANEPPIDLPQKPLS) are Cytoplasmic-facing. A helical transmembrane segment spans residues 57 to 77 (AYTTVAILCLMIAFGGFIFGW). At 78–112 (DTGTISGFVNLSDFIRRFGQKNDKGTYYLSKVRMG) the chain is on the extracellular side. Residue N87 is glycosylated (N-linked (GlcNAc...) asparagine). Residues 113-133 (LIVSIFNIGCAIGGIVLSKVG) traverse the membrane as a helical segment. The Cytoplasmic portion of the chain corresponds to 134–139 (DIYGRR). The chain crosses the membrane as a helical span at residues 140–160 (IGLITVTAIYVVGILIQITSI). Residues 161 to 170 (NKWYQYFIGR) lie on the Extracellular side of the membrane. The chain crosses the membrane as a helical span at residues 171–191 (IISGLGVGGIAVLSPMLISEV). The Cytoplasmic portion of the chain corresponds to 192-197 (APKHIR). Residues 198–218 (GTLVQLYQLMGTMGIFLGYCT) traverse the membrane as a helical segment. Topologically, residues 219–232 (NYGTKNYHNATQWR) are extracellular. A glycan (N-linked (GlcNAc...) asparagine) is linked at N227. A helical transmembrane segment spans residues 233–253 (VGLGLCFAWATFMVSGMMFVP). The Cytoplasmic portion of the chain corresponds to 254–336 (ESPRYLIEVG…IQSLQQLTGD (83 aa)). The chain crosses the membrane as a helical span at residues 337–353 (NYFFYYGTTIFKSVGLK). Over 354-359 (DSFQTS) the chain is Extracellular. Residues 360–377 (IIIGVVNFFSSFIAVYTI) traverse the membrane as a helical segment. Residues 378-384 (ERFGRRT) lie on the Cytoplasmic side of the membrane. The helical transmembrane segment at 385–405 (CLLWGAASMLCCFAVFASVGV) threads the bilayer. The Extracellular portion of the chain corresponds to 406 to 429 (TKLWPQGSSHQDITSQGAGNCMIV). Residues 430–450 (FTMFFIFSFATTWAGGCYVIV) form a helical membrane-spanning segment. Topologically, residues 451–467 (SETFPLRVKSRGMAIAT) are cytoplasmic. Residues 468–488 (AANWMWGFLISFFTPFITGAI) traverse the membrane as a helical segment. A topological domain (extracellular) is located at residue N489. The chain crosses the membrane as a helical span at residues 490–510 (FYYGYVFLGCLVFAYFYVFFF). The Cytoplasmic segment spans residues 511–567 (VPETKGLTLEEVNTMWLEGVPAWKSASWVPPERRTADYDADAIDHDNRPIYKRFFSS).

It belongs to the major facilitator superfamily. Sugar transporter (TC 2.A.1.1) family.

The protein resides in the membrane. Its function is as follows. Probable glucose transporter. The polypeptide is Hexose transporter HXT11 (HXT11) (Saccharomyces cerevisiae (strain ATCC 204508 / S288c) (Baker's yeast)).